A 169-amino-acid polypeptide reads, in one-letter code: Probable phospholipid hydroperoxide glutathione peroxidase (169 aa).

Cys43 is a catalytic residue.

Belongs to the glutathione peroxidase family. As to quaternary structure, monomer. Has a tendency to form higher mass oligomers. Interacts with FUNDC1; this interaction promotes GPX4 recruitment into mitochondria through TOM/TIM complex where it is degraded by mitophagy.

The protein resides in the cytoplasm. The enzyme catalyses a hydroperoxy polyunsaturated fatty acid + 2 glutathione = a hydroxy polyunsaturated fatty acid + glutathione disulfide + H2O. Functionally, protects cells and enzymes from oxidative damage, by catalyzing the reduction of hydrogen peroxide, lipid peroxides and organic hydroperoxide, by glutathione. The chain is Probable phospholipid hydroperoxide glutathione peroxidase (GPXle-1) from Solanum lycopersicum (Tomato).